Here is a 413-residue protein sequence, read N- to C-terminus: Zinc finger protein 821 (413 aa).

A disordered region spans residues 26–83; the sequence is RQAMMKTDFPGDLGSQRQAIQQLRDQDSSSSDSEGDEEETTQDEVSSHTSEEDGGVVK. The segment covering 58–67 has biased composition (acidic residues); the sequence is SEGDEEETTQ. C2H2-type zinc fingers lie at residues 117 to 141 and 151 to 173; these read QLCQCPLCQLDCGSREQLIAHVYQH and YMCPVCGRALSSPGSLGRHLLIH. The stretch at 260–367 forms a coiled coil; the sequence is ALRRQNEPLE…EKMDMMLRAQ (108 aa). The interval 279–320 is disordered; sequence RTAKKSRRDNETPEEREVRRMRDREAKRLQRMQETDEQRARR.

It belongs to the krueppel C2H2-type zinc-finger protein family.

The protein localises to the nucleus. Its function is as follows. May be involved in transcriptional regulation. The polypeptide is Zinc finger protein 821 (Znf821) (Mus musculus (Mouse)).